A 194-amino-acid chain; its full sequence is Peptidyl-tRNA hydrolase (194 aa).

Tyrosine 17 contacts tRNA. The active-site Proton acceptor is histidine 22. Residues tyrosine 68, asparagine 70, and asparagine 116 each contribute to the tRNA site.

The protein belongs to the PTH family. Monomer.

Its subcellular location is the cytoplasm. The catalysed reaction is an N-acyl-L-alpha-aminoacyl-tRNA + H2O = an N-acyl-L-amino acid + a tRNA + H(+). In terms of biological role, hydrolyzes ribosome-free peptidyl-tRNAs (with 1 or more amino acids incorporated), which drop off the ribosome during protein synthesis, or as a result of ribosome stalling. Its function is as follows. Catalyzes the release of premature peptidyl moieties from peptidyl-tRNA molecules trapped in stalled 50S ribosomal subunits, and thus maintains levels of free tRNAs and 50S ribosomes. This chain is Peptidyl-tRNA hydrolase, found in Pseudomonas aeruginosa (strain LESB58).